The sequence spans 161 residues: Nucleotide-binding protein Plav_2177 (161 aa).

It belongs to the YajQ family.

Functionally, nucleotide-binding protein. This chain is Nucleotide-binding protein Plav_2177, found in Parvibaculum lavamentivorans (strain DS-1 / DSM 13023 / NCIMB 13966).